Reading from the N-terminus, the 415-residue chain is Serine hydroxymethyltransferase (415 aa).

(6S)-5,6,7,8-tetrahydrofolate is bound by residues Leu117 and 121–123 (GHL). Lys226 is modified (N6-(pyridoxal phosphate)lysine).

This sequence belongs to the SHMT family. As to quaternary structure, homodimer. The cofactor is pyridoxal 5'-phosphate.

It localises to the cytoplasm. It carries out the reaction (6R)-5,10-methylene-5,6,7,8-tetrahydrofolate + glycine + H2O = (6S)-5,6,7,8-tetrahydrofolate + L-serine. It participates in one-carbon metabolism; tetrahydrofolate interconversion. It functions in the pathway amino-acid biosynthesis; glycine biosynthesis; glycine from L-serine: step 1/1. Its function is as follows. Catalyzes the reversible interconversion of serine and glycine with tetrahydrofolate (THF) serving as the one-carbon carrier. This reaction serves as the major source of one-carbon groups required for the biosynthesis of purines, thymidylate, methionine, and other important biomolecules. Also exhibits THF-independent aldolase activity toward beta-hydroxyamino acids, producing glycine and aldehydes, via a retro-aldol mechanism. This is Serine hydroxymethyltransferase from Dehalococcoides mccartyi (strain CBDB1).